The chain runs to 364 residues: Coproporphyrin III ferrochelatase (364 aa).

Positions 29 and 118 each coordinate Fe-coproporphyrin III. Positions 169 and 250 each coordinate Fe(2+).

This sequence belongs to the ferrochelatase family.

It localises to the cytoplasm. It catalyses the reaction Fe-coproporphyrin III + 2 H(+) = coproporphyrin III + Fe(2+). The protein operates within porphyrin-containing compound metabolism; protoheme biosynthesis. Involved in coproporphyrin-dependent heme b biosynthesis. Catalyzes the insertion of ferrous iron into coproporphyrin III to form Fe-coproporphyrin III. This is Coproporphyrin III ferrochelatase from Streptococcus pneumoniae (strain 70585).